Consider the following 886-residue polypeptide: Alanine--tRNA ligase (886 aa).

Residues His564, His568, Cys666, and His670 each contribute to the Zn(2+) site.

Belongs to the class-II aminoacyl-tRNA synthetase family. Zn(2+) is required as a cofactor.

The protein localises to the cytoplasm. The enzyme catalyses tRNA(Ala) + L-alanine + ATP = L-alanyl-tRNA(Ala) + AMP + diphosphate. In terms of biological role, catalyzes the attachment of alanine to tRNA(Ala) in a two-step reaction: alanine is first activated by ATP to form Ala-AMP and then transferred to the acceptor end of tRNA(Ala). Also edits incorrectly charged Ser-tRNA(Ala) and Gly-tRNA(Ala) via its editing domain. The protein is Alanine--tRNA ligase of Prochlorococcus marinus (strain AS9601).